The chain runs to 226 residues: Eukaryotic translation initiation factor 3 subunit K (226 aa).

The PCI domain occupies 44-202; it reads YSLEVNLCLL…IVLPQNEFNH (159 aa).

This sequence belongs to the eIF-3 subunit K family. Component of the eukaryotic translation initiation factor 3 (eIF-3) complex.

It localises to the cytoplasm. In terms of biological role, component of the eukaryotic translation initiation factor 3 (eIF-3) complex, which is involved in protein synthesis of a specialized repertoire of mRNAs and, together with other initiation factors, stimulates binding of mRNA and methionyl-tRNAi to the 40S ribosome. The eIF-3 complex specifically targets and initiates translation of a subset of mRNAs involved in cell proliferation. The polypeptide is Eukaryotic translation initiation factor 3 subunit K (TIF3K1) (Arabidopsis thaliana (Mouse-ear cress)).